The following is a 617-amino-acid chain: 1-deoxy-D-xylulose-5-phosphate synthase (617 aa).

Residues H80 and 121-123 contribute to the thiamine diphosphate site; that span reads GHS. D152 is a Mg(2+) binding site. Thiamine diphosphate contacts are provided by residues 153–154, N181, Y277, and E360; that span reads GA. A Mg(2+)-binding site is contributed by N181.

The protein belongs to the transketolase family. DXPS subfamily. As to quaternary structure, homodimer. It depends on Mg(2+) as a cofactor. The cofactor is thiamine diphosphate.

The enzyme catalyses D-glyceraldehyde 3-phosphate + pyruvate + H(+) = 1-deoxy-D-xylulose 5-phosphate + CO2. It participates in metabolic intermediate biosynthesis; 1-deoxy-D-xylulose 5-phosphate biosynthesis; 1-deoxy-D-xylulose 5-phosphate from D-glyceraldehyde 3-phosphate and pyruvate: step 1/1. Catalyzes the acyloin condensation reaction between C atoms 2 and 3 of pyruvate and glyceraldehyde 3-phosphate to yield 1-deoxy-D-xylulose-5-phosphate (DXP). This chain is 1-deoxy-D-xylulose-5-phosphate synthase, found in Blochmanniella floridana.